Here is a 156-residue protein sequence, read N- to C-terminus: Neuroactive polyprotein R15 (156 aa).

Residues 1 to 26 (MDSAGLHINFRLSHVLTVVTCILYIL) form the signal peptide. A propeptide spanning residues 27–48 (PPTTTAYSLPAPGKAAFQHQLS) is cleaved from the precursor. A disulfide bond links Cys74 and Cys81. A Pyrrolidone carboxylic acid modification is found at Gln120.

As to expression, expressed within the abdominal ganglion in neurons R15, RB(HE), the two L9(G) gill motoneurons, and L40 interneuron, all are parts of autonomic control circuit that contributes to implementing a central command to coordinate autonomic activity with escape locomotion.

The protein localises to the secreted. Functionally, the alpha-1 peptide acts as an osmoregulatory peptide, increasing blood volume, and also modulates the activity of a set of cardiac motor neurons that control heart rate. This chain is Neuroactive polyprotein R15, found in Aplysia californica (California sea hare).